Reading from the N-terminus, the 900-residue chain is DNA mismatch repair protein MutS (900 aa).

637–644 is a binding site for ATP; the sequence is GPNMAGKS.

Belongs to the DNA mismatch repair MutS family.

This protein is involved in the repair of mismatches in DNA. It is possible that it carries out the mismatch recognition step. This protein has a weak ATPase activity. In Methanosarcina barkeri (strain Fusaro / DSM 804), this protein is DNA mismatch repair protein MutS.